Consider the following 210-residue polypeptide: Thymidylate kinase (210 aa).

Gly10 to Ser17 provides a ligand contact to ATP.

It belongs to the thymidylate kinase family.

The catalysed reaction is dTMP + ATP = dTDP + ADP. In terms of biological role, phosphorylation of dTMP to form dTDP in both de novo and salvage pathways of dTTP synthesis. This Pseudomonas putida (strain ATCC 700007 / DSM 6899 / JCM 31910 / BCRC 17059 / LMG 24140 / F1) protein is Thymidylate kinase.